The chain runs to 1120 residues: MLQQKFPQAAKSFFTIDSFIKNSKQDFVLVTSNEEEALQLYKQALFFLPSENIYYFPSYDTIPYDHTSPNCNILSKRAETLSKLTTNKGNKLVITHATNLLNKLPPKDFFAKYYLKLFPKMKLSANELSKFLVENSFTRNASTVDVGEFAVRGEIVDLILPESKGYRINFSWDYVESIKQFDIDTQISTRSCNELIISPANEIVLNPETISNFKDNYLRNFGVNHTDNPLYEAITGGRKFSGYEQLLPLFYDSYSGLTDYLNNPVIIFDNLTKQAILEFEHSYNDFYKARLDANKLKFNSFYPTLSPSQLYFTSLEAIELLEQENNILISYENSEQASIVENIAAASFVEKKTIFDKLFEVIKANSRKKIIIGSSVLSSFERVKSIIENYEYSYNEIEYLEEAKTNTINIAILPLNQSFSTPEYLFIAASELLEEKVTPTNTNKKLKNILLELDHLAEGELIVHKDHGIGQFLKLEALEIKGKLHDFLKILYAGNDKLYIPVENIEVIKKYGSDVAQLDKLGSVSWQKNKAKLKNRIKEIALHLMQIAAKRKLNTTAAIEFDLEEYDKFCAKFPFTETEDQLNAINDIREDLSNGMLMDRLICGDVGFGKTEVAMRAAFMVAKSLNENSPQVAVVVPTTILCSQHFARFTERFKDSDLNIKQLSSVVSSKEAKIVRSELESGKINIIIGTHSLLHKVTKFCNLKLLIIDEEQHFGVGQKEFLKSLKSSTHVLAMSATPIPRTLQMSMTGLKELSIIATPPLNRLEVRTSVMPFDPVIIRDALLHEHFRGGKSFFVVPRINDIEDIEKQLKQIVPELSYKVAHGKMSPNKIDEIMSEFYAGKFDILISTTIIESGIDIQDANTMIIHKADMLGLSQLYQLRGRIGRGKMRGYAYLTLPSHKKMTPHSLRRLEIIQNSCALGSGFTIASHDMDLRGFGNLIGEEQSGQIREVGTELYQEMLEEQIAIFKDEPISGEQPFIPTINLGLSVFIPDNYVSDSVLKLGLYRRIGNLNDDLEVEKFKDEMIDRFGSLPTEFNNLLDIVKIKLLCFKLNIENLDSGDNGFVIKFYKNADMADKILKFVSTYTANAKIKPDNKLVFIKKLVGKTIITEANQLLWNLSEI.

Positions 591-756 constitute a Helicase ATP-binding domain; that stretch reads DLSNGMLMDR…MTGLKELSII (166 aa). 604–611 is an ATP binding site; that stretch reads GDVGFGKT. A DEEQ box motif is present at residues 709–712; the sequence is DEEQ. Residues 777–931 form the Helicase C-terminal domain; the sequence is IIRDALLHEH…GFTIASHDMD (155 aa).

It in the N-terminal section; belongs to the UvrB family. The protein in the C-terminal section; belongs to the helicase family. RecG subfamily.

It localises to the cytoplasm. Couples transcription and DNA repair by recognizing RNA polymerase (RNAP) stalled at DNA lesions. Mediates ATP-dependent release of RNAP and its truncated transcript from the DNA, and recruitment of nucleotide excision repair machinery to the damaged site. The sequence is that of Transcription-repair-coupling factor from Rickettsia bellii (strain RML369-C).